The primary structure comprises 969 residues: RNA polymerase-associated protein RapA (969 aa).

Positions 162 to 339 (EVGQRVAPRV…FARLALLDAD (178 aa)) constitute a Helicase ATP-binding domain. ATP is bound at residue 175–182 (DEVGLGKT). Positions 285–288 (DEAH) match the DEAH box motif. In terms of domain architecture, Helicase C-terminal spans 492–663 (RIEWLITFLK…GFLKNPQAVG (172 aa)).

Belongs to the SNF2/RAD54 helicase family. RapA subfamily. In terms of assembly, interacts with the RNAP. Has a higher affinity for the core RNAP than for the holoenzyme. Its ATPase activity is stimulated by binding to RNAP.

Functionally, transcription regulator that activates transcription by stimulating RNA polymerase (RNAP) recycling in case of stress conditions such as supercoiled DNA or high salt concentrations. Probably acts by releasing the RNAP, when it is trapped or immobilized on tightly supercoiled DNA. Does not activate transcription on linear DNA. Probably not involved in DNA repair. This Actinobacillus pleuropneumoniae serotype 7 (strain AP76) protein is RNA polymerase-associated protein RapA.